Consider the following 194-residue polypeptide: Putative 3-methyladenine DNA glycosylase (194 aa).

The protein belongs to the DNA glycosylase MPG family.

This Anaeromyxobacter sp. (strain Fw109-5) protein is Putative 3-methyladenine DNA glycosylase.